A 476-amino-acid polypeptide reads, in one-letter code: Oogenesin-2 (476 aa).

One copy of the LRR 1; degenerate repeat lies at R97–G121. Residues H176–H200 form an LRR 2; degenerate repeat. An LRR 3; degenerate repeat occupies A201–Q226. The stretch at M227–T264 is one LRR 4; degenerate repeat. LRR repeat units follow at residues F265–L285, K286–R317, R342–Q369, and C370–H394.

The protein belongs to the PRAME family. In terms of tissue distribution, expressed in ovary, specifically in oocytes. Detected in follicles with two layers of granulosa cells, and are present in early as well as large antral follicles.

The chain is Oogenesin-2 from Mus musculus (Mouse).